Reading from the N-terminus, the 277-residue chain is Tryptophan synthase alpha chain (277 aa).

Catalysis depends on proton acceptor residues Glu59 and Asp70.

The protein belongs to the TrpA family. As to quaternary structure, tetramer of two alpha and two beta chains.

It carries out the reaction (1S,2R)-1-C-(indol-3-yl)glycerol 3-phosphate + L-serine = D-glyceraldehyde 3-phosphate + L-tryptophan + H2O. Its pathway is amino-acid biosynthesis; L-tryptophan biosynthesis; L-tryptophan from chorismate: step 5/5. Functionally, the alpha subunit is responsible for the aldol cleavage of indoleglycerol phosphate to indole and glyceraldehyde 3-phosphate. The protein is Tryptophan synthase alpha chain of Streptomyces avermitilis (strain ATCC 31267 / DSM 46492 / JCM 5070 / NBRC 14893 / NCIMB 12804 / NRRL 8165 / MA-4680).